A 184-amino-acid polypeptide reads, in one-letter code: NADH-dependent flavin reductase subunit 2 (184 aa).

The protein belongs to the NADH-dependent flavin reductase family. Requires LJ_0548 for activity, but the exact composition of the enzyme is unclear.

It catalyses the reaction a reduced flavin + NAD(+) = an oxidized flavin + NADH + 2 H(+). Its function is as follows. Component of an enzyme that catalyzes the reduction of free flavins (FMN, FAD and riboflavin) by NADH; the reduced flavins produced by this reaction likely spontaneously react with oxygen, yielding hydrogen peroxide. Is responsible for the major H(2)O(2) production in L.johnsonii in the presence of oxygen. Cannot use NADPH instead of NADH as the electron donor. The chain is NADH-dependent flavin reductase subunit 2 (nfr2) from Lactobacillus johnsonii (strain CNCM I-12250 / La1 / NCC 533).